The primary structure comprises 252 residues: Small ribosomal subunit protein uS3 (252 aa).

In terms of domain architecture, KH type-2 spans 39–111 (IRKLINNFAK…EVNLNVLEVK (73 aa)). The interval 222–252 (KPFASQSSNTPNRRPRNFKGGNNNHVNAKKN) is disordered. The span at 241–252 (GGNNNHVNAKKN) shows a compositional bias: polar residues.

The protein belongs to the universal ribosomal protein uS3 family. In terms of assembly, part of the 30S ribosomal subunit. Forms a tight complex with proteins S10 and S14.

In terms of biological role, binds the lower part of the 30S subunit head. Binds mRNA in the 70S ribosome, positioning it for translation. This chain is Small ribosomal subunit protein uS3, found in Phytoplasma sp. (strain STRAWB2).